A 487-amino-acid polypeptide reads, in one-letter code: Glutamyl-tRNA(Gln) amidotransferase subunit A (487 aa).

Catalysis depends on charge relay system residues Lys-79 and Ser-154. The active-site Acyl-ester intermediate is Ser-178.

The protein belongs to the amidase family. GatA subfamily. As to quaternary structure, heterotrimer of A, B and C subunits.

It carries out the reaction L-glutamyl-tRNA(Gln) + L-glutamine + ATP + H2O = L-glutaminyl-tRNA(Gln) + L-glutamate + ADP + phosphate + H(+). Functionally, allows the formation of correctly charged Gln-tRNA(Gln) through the transamidation of misacylated Glu-tRNA(Gln) in organisms which lack glutaminyl-tRNA synthetase. The reaction takes place in the presence of glutamine and ATP through an activated gamma-phospho-Glu-tRNA(Gln). The sequence is that of Glutamyl-tRNA(Gln) amidotransferase subunit A from Moorella thermoacetica (strain ATCC 39073 / JCM 9320).